We begin with the raw amino-acid sequence, 76 residues long: Small ribosomal subunit protein bS18 (76 aa).

Belongs to the bacterial ribosomal protein bS18 family. In terms of assembly, part of the 30S ribosomal subunit. Forms a tight heterodimer with protein bS6.

Binds as a heterodimer with protein bS6 to the central domain of the 16S rRNA, where it helps stabilize the platform of the 30S subunit. The protein is Small ribosomal subunit protein bS18 of Nitrosomonas europaea (strain ATCC 19718 / CIP 103999 / KCTC 2705 / NBRC 14298).